The chain runs to 79 residues: Cyclotide phyb-A (79 aa).

The propeptide occupies 1–43; sequence MVGVNSLRSALYLIVLILFVQLTYFSDARVMDVDLSRAFLPLT. The cyclopeptide (Gly-Asn) cross-link spans 44 to 73; that stretch reads GIGCGESCVWIPCVSAAIGCSCSNKICYRN. 3 disulfides stabilise this stretch: Cys47-Cys63, Cys51-Cys65, and Cys56-Cys70. Positions 74 to 79 are excised as a propeptide; that stretch reads GIIPKK.

This is a cyclic peptide. Post-translationally, contains 3 disulfide bonds. In terms of tissue distribution, expressed in midvein, lamina and periphery of leaves (at protein level).

Probably participates in a plant defense mechanism. The protein is Cyclotide phyb-A of Petunia hybrida (Petunia).